We begin with the raw amino-acid sequence, 403 residues long: Aurora kinase A (403 aa).

The segment at 1–125 (MDRSKENCIS…SKQKNEESKK (125 aa)) is disordered. 2 stretches are compositionally biased toward polar residues: residues 27–83 (VTQQ…QATS) and 91–101 (PLNNTQKSKQP). Phosphoserine occurs at positions 41 and 51. Residues 114 to 125 (LASKQKNEESKK) are compositionally biased toward basic and acidic residues. Residues 133 to 383 (FEIGRPLGKG…LREVLEHPWI (251 aa)) form the Protein kinase domain. ATP-binding positions include Lys-143, Lys-162, and 211 to 213 (EYA). Asp-256 functions as the Proton acceptor in the catalytic mechanism. Residue Lys-258 forms a Glycyl lysine isopeptide (Lys-Gly) (interchain with G-Cter in SUMO2) linkage. Residues 260–261 (EN) and Asp-274 contribute to the ATP site. Residues 280–293 (HAPSSRRTTLCGTL) are activation segment. Thr-287 and Thr-288 each carry phosphothreonine. Ser-342 carries the post-translational modification Phosphoserine; by PKA and PAK.

The protein belongs to the protein kinase superfamily. Ser/Thr protein kinase family. Aurora subfamily. Part of a complex composed of NEDD9, AURKA and CTTN; within the complex NEDD9 acts as a scaffold protein and is required for complex formation. Identified in a complex with AUNIP and NIN. Interacts with FBXL7. Interacts with CPEB1, JTB, TACC1, TPX2, PPP2CA, as well as with the protein phosphatase type 1 (PP1) isoforms PPP1CA, PPP1CB and PPP1CC. Also interacts with its substrates ARHGEF2, BORA, KIF2A, PARD3, and p53/TP53. Interaction with BORA promotes phosphorylation of PLK1. Interacts with CIMAP3. Interacts with GADD45A, competing with its oligomerization. Interacts (via C-terminus) with AUNIP (via C-terminus). Interacts with FRY; this interaction facilitates AURKA-mediated PLK1 phosphorylation. Interacts with SIRT2. Interacts with MYCN; interaction is phospho-independent and triggers AURKA activation; AURKA competes with FBXW7 for binding to unphosphorylated MYCN but not for binding to phosphorylated MYCN. Interacts with HNRNPU. Interacts with AAAS. Interacts with KLHL18 and CUL3. Interacts with FOXP1. Interacts with HDAC6; AURKA-mediated phosphorylation of HDAC6 promotes deacetylation of alpha-tubulin. Activated by phosphorylation at Thr-288; this brings about a change in the conformation of the activation segment. Phosphorylation at Thr-288 varies during the cell cycle and is highest during M phase. Autophosphorylated at Thr-288 upon TPX2 binding. Thr-288 can be phosphorylated by several kinases, including PAK and PKA. Protein phosphatase type 1 (PP1) binds AURKA and inhibits its activity by dephosphorylating Thr-288 during mitosis. Phosphorylation at Ser-342 decreases the kinase activity. PPP2CA controls degradation by dephosphorylating Ser-51 at the end of mitosis. Post-translationally, ubiquitinated by the E3 ubiquitin-protein ligase complex SCF(FBXL7) during mitosis, leading to its degradation by the proteasome. Ubiquitinated by CHFR, leading to its degradation by the proteasome. Ubiquitinated by the anaphase-promoting complex (APC), leading to its degradation by the proteasome. Ubiquitinated by the CUL3-KLHL18 ligase leading to its activation at the centrosome which is required for initiating mitotic entry. Ubiquitination mediated by CUL3-KLHL18 ligase does not lead to its degradation by the proteasome. As to expression, highly expressed in testis and weakly in skeletal muscle, thymus and spleen. Also highly expressed in colon, ovarian, prostate, neuroblastoma, breast and cervical cancer cell lines.

It localises to the cytoplasm. The protein localises to the cytoskeleton. Its subcellular location is the microtubule organizing center. It is found in the centrosome. The protein resides in the spindle pole. It localises to the centriole. The protein localises to the cell projection. Its subcellular location is the neuron projection. It is found in the cilium. The protein resides in the cilium basal body. It localises to the basolateral cell membrane. The catalysed reaction is L-seryl-[protein] + ATP = O-phospho-L-seryl-[protein] + ADP + H(+). It catalyses the reaction L-threonyl-[protein] + ATP = O-phospho-L-threonyl-[protein] + ADP + H(+). Activation of CDK1, appears to be an upstream event of AURKA activation. Phosphatase inhibitor-2 (PPP1R2) and TPX2 act also as activators. Inactivated by the G2 checkpoint. Inhibited by GADD45A and p53/TP53, and through dephosphorylation by protein phosphatase type 1 (PP1). MLN8054 is also a potent and selective inhibitor. Activated during the early phase of cilia disassembly in the presence of CIMAP3. Inhibited by the small molecule inhibitor VX-680. Mitotic serine/threonine kinase that contributes to the regulation of cell cycle progression. Associates with the centrosome and the spindle microtubules during mitosis and plays a critical role in various mitotic events including the establishment of mitotic spindle, centrosome duplication, centrosome separation as well as maturation, chromosomal alignment, spindle assembly checkpoint, and cytokinesis. Required for normal spindle positioning during mitosis and for the localization of NUMA1 and DCTN1 to the cell cortex during metaphase. Required for initial activation of CDK1 at centrosomes. Phosphorylates numerous target proteins, including ARHGEF2, BORA, BRCA1, CDC25B, DLGP5, HDAC6, KIF2A, LATS2, NDEL1, PARD3, PPP1R2, PLK1, RASSF1, TACC3, p53/TP53 and TPX2. Phosphorylates MCRS1 which is required for MCRS1-mediated kinetochore fiber assembly and mitotic progression. Regulates KIF2A tubulin depolymerase activity. Important for microtubule formation and/or stabilization. Required for normal axon formation. Plays a role in microtubule remodeling during neurite extension. Also acts as a key regulatory component of the p53/TP53 pathway, and particularly the checkpoint-response pathways critical for oncogenic transformation of cells, by phosphorylating and destabilizing p53/TP53. Phosphorylates its own inhibitors, the protein phosphatase type 1 (PP1) isoforms, to inhibit their activity. Inhibits cilia outgrowth. Required for cilia disassembly via phosphorylation of HDAC6 and subsequent deacetylation of alpha-tubulin. Regulates protein levels of the anti-apoptosis protein BIRC5 by suppressing the expression of the SCF(FBXL7) E3 ubiquitin-protein ligase substrate adapter FBXL7 through the phosphorylation of the transcription factor FOXP1. This chain is Aurora kinase A, found in Homo sapiens (Human).